We begin with the raw amino-acid sequence, 1115 residues long: Eukaryotic translation initiation factor 2-alpha kinase 3 (1115 aa).

The first 29 residues, 1-29, serve as a signal peptide directing secretion; the sequence is MERATGPGSLARTLLLPLLLGLVAGTVTA. The Extracellular segment spans residues 30–514; sequence RRTSDLLAPT…PNYKNIRKKD (485 aa). Positions 74-101 are disordered; sequence SEALPAAAGEQEAREPEPEPEEEPDIRP. Residue Asn-259 is glycosylated (N-linked (GlcNAc...) asparagine). The helical transmembrane segment at 515–535 threads the bilayer; it reads PVLLLHWWKEIVGTIVFCIVA. Residues 536-1115 are Cytoplasmic-facing; that stretch reads TTFIVRRLFH…SSPHSPLPSN (580 aa). In terms of domain architecture, Protein kinase spans 593-1076; it reads FEPIQCMGRG…AASIIENAIF (484 aa). 599 to 607 is an ATP binding site; that stretch reads MGRGGFGVV. Position 619 is a phosphotyrosine; by autocatalysis (Tyr-619). Lys-622 contacts ATP. Residues 647 to 887 are insert loop; that stretch reads EHPGIVRYFN…SPKVYLYIQM (241 aa). The residue at position 715 (Ser-715) is a Phosphoserine. Residue Thr-802 is modified to Phosphothreonine. 2 disordered regions span residues 807–832 and 841–860; these read VFED…VGNH and RHSG…SRPT. Residues 845–860 are compositionally biased toward polar residues; sequence SKSSEPTVSVSPSRPT. Asp-936 serves as the catalytic Proton acceptor. Phosphothreonine is present on Thr-981. The interval 1087–1115 is disordered; sequence LRQRSRSMSSPGAKHSRHSSSPHSPLPSN. Residue Ser-1093 is modified to Phosphoserine.

Belongs to the protein kinase superfamily. Ser/Thr protein kinase family. GCN2 subfamily. As to quaternary structure, forms dimers with HSPA5/BIP in resting cells. Homotetramerizes in response to endoplasmic reticulum (ER) stress, leading to its activation. Interacts with HSP90B1/GRP94. Interacts with DNAJC3; inhibiting EIF2AK3/PERK activity. Interacts with ATAD3A; ATAD3A and EIF2S1/eIF-2-alpha occupy a common binding site within the cytoplasmic loop of EIF2AK3/PERK, leading to prevent EIF2AK3/PERK association with its substrate EIF2S1/eIF-2-alpha. Interacts with MFN2. Interacts with TMEM33. Interacts with PDIA6. Interacts with LACC1. Post-translationally, oligomerization of the N-terminal ER luminal domain by ER stress promotes EIF2AK3/PERK trans-autophosphorylation of the C-terminal cytoplasmic kinase domain at multiple residues including Thr-981 on the kinase activation loop. Autophosphorylated at Tyr-619 following endoplasmic reticulum stress, leading to activate its activity. Dephosphorylated at Tyr-619 by PTPN1/PTP1B, leading to inactivate its enzyme activity. Phosphorylation at Thr-802 by AKT (AKT1, AKT2 and/or AKT3) inactivates EIF2AK3/PERK. In terms of processing, ADP-ribosylated by PARP16 upon ER stress, which increases kinase activity.

It is found in the endoplasmic reticulum membrane. It catalyses the reaction L-seryl-[protein] + ATP = O-phospho-L-seryl-[protein] + ADP + H(+). The enzyme catalyses L-threonyl-[protein] + ATP = O-phospho-L-threonyl-[protein] + ADP + H(+). The catalysed reaction is L-tyrosyl-[protein] + ATP = O-phospho-L-tyrosyl-[protein] + ADP + H(+). With respect to regulation, inhibited by HSPA5/BIP in absence of stress. Perturbation in protein folding in the endoplasmic reticulum (ER) promotes reversible dissociation from HSPA5/BIP and oligomerization, resulting in trans-autophosphorylation and kinase activity induction. Inactivated following phosphorylation at Thr-802 by AKT (AKT1, AKT2 and/or AKT3). Inhibited by ATAD3A at mitochondria-endoplasmic reticulum contact sites, providing a safe haven for mitochondrial protein translation during ER stress. In terms of biological role, metabolic-stress sensing protein kinase that phosphorylates the alpha subunit of eukaryotic translation initiation factor 2 (EIF2S1/eIF-2-alpha) in response to various stress, such as unfolded protein response (UPR). Key effector of the integrated stress response (ISR) to unfolded proteins: EIF2AK3/PERK specifically recognizes and binds misfolded proteins, leading to its activation and EIF2S1/eIF-2-alpha phosphorylation. EIF2S1/eIF-2-alpha phosphorylation in response to stress converts EIF2S1/eIF-2-alpha in a global protein synthesis inhibitor, leading to a global attenuation of cap-dependent translation, while concomitantly initiating the preferential translation of ISR-specific mRNAs, such as the transcriptional activators ATF4 and QRICH1, and hence allowing ATF4- and QRICH1-mediated reprogramming. The EIF2AK3/PERK-mediated unfolded protein response increases mitochondrial oxidative phosphorylation by promoting ATF4-mediated expression of COX7A2L/SCAF1, thereby increasing formation of respiratory chain supercomplexes. In contrast to most subcellular compartments, mitochondria are protected from the EIF2AK3/PERK-mediated unfolded protein response due to EIF2AK3/PERK inhibition by ATAD3A at mitochondria-endoplasmic reticulum contact sites. In addition to EIF2S1/eIF-2-alpha, also phosphorylates NFE2L2/NRF2 in response to stress, promoting release of NFE2L2/NRF2 from the BCR(KEAP1) complex, leading to nuclear accumulation and activation of NFE2L2/NRF2. Serves as a critical effector of unfolded protein response (UPR)-induced G1 growth arrest due to the loss of cyclin-D1 (CCND1). Involved in control of mitochondrial morphology and function. In Bos taurus (Bovine), this protein is Eukaryotic translation initiation factor 2-alpha kinase 3.